A 124-amino-acid polypeptide reads, in one-letter code: UPF0102 protein BL0935 (124 aa).

The protein belongs to the UPF0102 family.

The chain is UPF0102 protein BL0935 from Bifidobacterium longum (strain NCC 2705).